Consider the following 66-residue polypeptide: Large ribosomal subunit protein bL35 (66 aa).

The segment covering 1–16 (MPKQKTHRASAKRFKR) has biased composition (basic residues). Residues 1 to 20 (MPKQKTHRASAKRFKRTGSG) form a disordered region.

Belongs to the bacterial ribosomal protein bL35 family.

The chain is Large ribosomal subunit protein bL35 from Streptococcus thermophilus (strain CNRZ 1066).